Consider the following 495-residue polypeptide: L-arabinose isomerase (495 aa).

Mn(2+)-binding residues include glutamate 305, glutamate 332, histidine 349, and histidine 448.

Belongs to the arabinose isomerase family. Mn(2+) serves as cofactor.

The enzyme catalyses beta-L-arabinopyranose = L-ribulose. The protein operates within carbohydrate degradation; L-arabinose degradation via L-ribulose; D-xylulose 5-phosphate from L-arabinose (bacterial route): step 1/3. Catalyzes the conversion of L-arabinose to L-ribulose. The polypeptide is L-arabinose isomerase (Mannheimia succiniciproducens (strain KCTC 0769BP / MBEL55E)).